A 310-amino-acid polypeptide reads, in one-letter code: Methionyl-tRNA formyltransferase (310 aa).

Residue 110 to 113 (SLLP) participates in (6S)-5,6,7,8-tetrahydrofolate binding.

Belongs to the Fmt family.

It catalyses the reaction L-methionyl-tRNA(fMet) + (6R)-10-formyltetrahydrofolate = N-formyl-L-methionyl-tRNA(fMet) + (6S)-5,6,7,8-tetrahydrofolate + H(+). Functionally, attaches a formyl group to the free amino group of methionyl-tRNA(fMet). The formyl group appears to play a dual role in the initiator identity of N-formylmethionyl-tRNA by promoting its recognition by IF2 and preventing the misappropriation of this tRNA by the elongation apparatus. The polypeptide is Methionyl-tRNA formyltransferase (Halorhodospira halophila (strain DSM 244 / SL1) (Ectothiorhodospira halophila (strain DSM 244 / SL1))).